A 907-amino-acid chain; its full sequence is Glutamate receptor 1 (907 aa).

The signal sequence occupies residues 1-18 (MPYIFAFFCTGFLGAVVG). Over 19 to 536 (ANFPNNIQIG…GVFSFLDPLA (518 aa)) the chain is Extracellular. N-linked (GlcNAc...) asparagine glycosylation is found at N63, N249, N257, N363, N401, and N406. A disulfide bridge links C75 with C323. 3 residues coordinate L-glutamate: P492, T494, and R499. Residues 537–557 (YEIWMCIVFAYIGVSVVLFLV) traverse the membrane as a helical segment. The Cytoplasmic portion of the chain corresponds to 558-584 (SRFSPYEWHSEEFEEGRDQTTSDQSNE). The helical; Pore-forming intramembrane region spans 585–600 (FGIFNSLWFSLGAFMQ). The stretch at 601–603 (QGC) is an intramembrane region. The S-palmitoyl cysteine moiety is linked to residue C603. Residues 604 to 609 (DISPRS) lie on the Cytoplasmic side of the membrane. Residues 610-630 (LSGRIVGGVWWFFTLIIISSY) form a helical membrane-spanning segment. The Extracellular portion of the chain corresponds to 631-805 (TANLAAFLTV…DKTSALSLSN (175 aa)). Phosphoserine is present on S645. Residues S668 and T669 each coordinate L-glutamate. A Phosphoserine; by PKC modification is found at S710. E719 contacts L-glutamate. A disulfide bridge connects residues C732 and C787. The chain crosses the membrane as a helical span at residues 806 to 826 (VAGVFYILIGGLGLAMLVALI). Topologically, residues 827–907 (EFCYKSRSES…SGMPLGATGL (81 aa)) are cytoplasmic. A lipid anchor (S-palmitoyl cysteine) is attached at C829. S849 is subject to Phosphoserine; by PKC, PKA and CAMK2. The disordered stretch occupies residues 857–881 (STLPRNSGAGASGGGGSGENGRVVS). S863 is modified (phosphoserine; by PKC, PKA and PKG/PRKG2). The segment covering 866–875 (GASGGGGSGE) has biased composition (gly residues). Positions 904-907 (ATGL) match the PDZ-binding motif.

Belongs to the glutamate-gated ion channel (TC 1.A.10.1) family. GRIA1 subfamily. In terms of assembly, homotetramer or heterotetramer of pore-forming glutamate receptor subunits; heteromeric assembly can be the result of both receptor subtype and flip-flop forms and according the composition, one partner can be dominant with respect to the fast desensitizing current component, whereas the other can determine the steady-state component. Tetramers may be formed by the dimerization of dimers. Found in a complex with GRIA2, GRIA3, GRIA4, CNIH2, CNIH3, CACNG2, CACNG3, CACNG4, CACNG5, CACNG7 and CACNG8. Interacts with HIP1 and RASGRF2. Interacts with SYNDIG1 and GRIA2. Interacts with DLG1 (via C-terminus). Interacts with LRFN1. Interacts with PRKG2. Interacts with CNIH2 and CACNG2. Interacts with CACNG5; this interaction modulates the gating. Interacts (via C-terminus) with PDLIM4 (via LIM domain); this interaction as well as the interaction of PDLIM4 with alpha-actinin is required for their colocalization in early endosomes. Interacts with SNX27 (via PDZ domain); the interaction is required for recycling to the plasma membrane when endocytosed and prevent degradation in lysosomes. Interacts (via PDZ-binding motif) with SHANK3 (via PDZ domain). Interacts with CACNG3; associates GRIA1 with the adapter protein complex 4 (AP-4) to target GRIA1 to the somatodendritic compartment of neurons. Interacts with CACNG2; this interaction mediates traffick to the plasma membrane and modulation of desensitization. Interaction with CNIH2 and CNIH3; this interaction promotes expression at the plasma membrane and extensively modulates their gating properties by slowing deactivation and desensitization kinetics. Found in a complex with GRIA2, GRIA3, GRIA4, DLG4, CACNG8 and CNIH2. Post-translationally, phosphorylated at Ser-645. Phosphorylated at Ser-710 by PKC. Phosphorylated at Ser-849 by PKC, PKA and CAMK2. Phosphorylated at Ser-863 by PKC, PKA and PRKG2. Phosphorylation of Ser-863 is reduced by induction of long-term depression and increased by induction of long-term potentiation. Palmitoylated. Depalmitoylated by CPT1C and upon L-glutamate stimulation. ZDHHC3/GODZ specifically palmitoylates Cys-603, which leads to Golgi retention and decreased cell surface expression. In contrast, Cys-829 palmitoylation does not affect cell surface expression but regulates stimulation-dependent endocytosis. Detected in cerebellum (at protein level).

Its subcellular location is the cell membrane. The protein localises to the endoplasmic reticulum membrane. It localises to the postsynaptic cell membrane. It is found in the postsynaptic density membrane. The protein resides in the cell projection. Its subcellular location is the dendrite. The protein localises to the dendritic spine. It localises to the early endosome membrane. It is found in the recycling endosome membrane. The protein resides in the presynapse. Its subcellular location is the synapse. The enzyme catalyses Ca(2+)(in) = Ca(2+)(out). It catalyses the reaction Na(+)(in) = Na(+)(out). The catalysed reaction is Mg(2+)(in) = Mg(2+)(out). It carries out the reaction Li(+)(in) = Li(+)(out). The enzyme catalyses K(+)(in) = K(+)(out). It catalyses the reaction Sr(2+)(in) = Sr(2+)(out). With respect to regulation, glutamate-gated receptor activity inhibited by DNQX (6,7-dinitroquinoxaline-2,3-dione). Its function is as follows. Ionotropic glutamate receptor that functions as a ligand-gated cation channel, gated by L-glutamate and glutamatergic agonists such as alpha-amino-3-hydroxy-5-methyl-4-isoxazolepropionic acid (AMPA), quisqualic acid, and kainic acid. L-glutamate acts as an excitatory neurotransmitter at many synapses in the central nervous system. Binding of the excitatory neurotransmitter L-glutamate induces a conformation change, leading to the opening of the cation channel, and thereby converts the chemical signal to an electrical impulse upon entry of monovalent and divalent cations such as sodium and calcium. The receptor then desensitizes rapidly and enters in a transient inactive state, characterized by the presence of bound agonist. In the presence of CACNG2 or CACNG4 or CACNG7 or CACNG8, shows resensitization which is characterized by a delayed accumulation of current flux upon continued application of L-glutamate. Resensitization is blocked by CNIH2 through interaction with CACNG8 in the CACNG8-containing AMPA receptors complex. Calcium (Ca(2+)) permeability depends on subunits composition and, heteromeric channels containing edited GRIA2 subunit are calcium-impermeable. Also permeable to other divalents cations such as strontium(2+) and magnesium(2+) and monovalent cations such as potassium(1+) and lithium(1+). This is Glutamate receptor 1 from Rattus norvegicus (Rat).